Consider the following 513-residue polypeptide: Cytochrome P450 72A552 (513 aa).

The helical transmembrane segment at 2 to 22 (EISVASVTVSVVIAVVTWWVW) threads the bilayer. Heme is bound at residue Cys460.

The protein belongs to the cytochrome P450 family. The cofactor is heme.

The protein resides in the membrane. The catalysed reaction is oleanolate + reduced [NADPH--hemoprotein reductase] + O2 = hederagenin + oxidized [NADPH--hemoprotein reductase] + H2O + H(+). Catalyzes the oxidation of oleanolate at the C-23 position to form hederagenin. The chain is Cytochrome P450 72A552 from Barbarea vulgaris (Yellow rocket).